A 375-amino-acid polypeptide reads, in one-letter code: Amylovoran biosynthesis protein AmsC (375 aa).

Helical transmembrane passes span 2-22 (AIYW…LAMI), 31-51 (KILI…FAGI), 93-113 (MVLA…LLFI), 162-182 (IAFI…FIVL), 208-228 (LPLV…KKLF), 256-276 (VFGL…LYYF), 287-307 (VYIL…FSDF), 309-329 (IFGG…FAFL), and 337-357 (LLNF…NTIL).

It localises to the cell membrane. Its pathway is glycan metabolism; exopolysaccharide biosynthesis. Functionally, involved in the biosynthesis of amylovoran which functions as a virulence factor. In Erwinia amylovora (Fire blight bacteria), this protein is Amylovoran biosynthesis protein AmsC (amsC).